A 202-amino-acid polypeptide reads, in one-letter code: Ribosomal RNA small subunit methyltransferase G (202 aa).

S-adenosyl-L-methionine-binding positions include G75, F80, 125–126 (VQ), and R139.

This sequence belongs to the methyltransferase superfamily. RNA methyltransferase RsmG family.

It localises to the cytoplasm. Specifically methylates the N7 position of a guanine in 16S rRNA. In Mesomycoplasma hyopneumoniae (strain J / ATCC 25934 / NCTC 10110) (Mycoplasma hyopneumoniae), this protein is Ribosomal RNA small subunit methyltransferase G.